A 156-amino-acid chain; its full sequence is Histidine-containing phosphotransfer protein 2 (156 aa).

Methionine 1 bears the N-acetylmethionine mark. Residues 40–147 (SPDFVSEVLS…NLEKQIIQAG (108 aa)) enclose the HPt domain. Position 82 is a phosphohistidine (histidine 82).

In terms of assembly, interacts with the B-type response regulators ARR1, ARR2 and ARR10. Binds to AHK1, AHK2, AHK3, AHK4, AHK5, ETR1 and CKI1. Post-translationally, two-component system major event consists of a His-to-Asp phosphorelay between a sensor histidine kinase (HK) and a response regulator (RR). In plants, the His-to-Asp phosphorelay involves an additional intermediate named Histidine-containing phosphotransfer protein (HPt). This multistep phosphorelay consists of a His-Asp-His-Asp sequential transfer of a phosphate group between first a His and an Asp of the HK protein, followed by the transfer to a conserved His of the HPt protein and finally the transfer to an Asp in the receiver domain of the RR protein. Strongly expressed in flowers and roots. Detected also in leaves, siliques and stems.

Its subcellular location is the cytoplasm. It is found in the cytosol. The protein resides in the nucleus. Functionally, functions as a two-component phosphorelay mediators between cytokinin sensor histidine kinases and response regulator (B-type ARRs). Plays an important role in propagating cytokinin signal transduction through the multistep His-to-Asp phosphorelay. The polypeptide is Histidine-containing phosphotransfer protein 2 (AHP2) (Arabidopsis thaliana (Mouse-ear cress)).